A 1405-amino-acid polypeptide reads, in one-letter code: DNA-directed RNA polymerase subunit beta' (1405 aa).

Cysteine 70, cysteine 72, cysteine 85, and cysteine 88 together coordinate Zn(2+). Mg(2+)-binding residues include aspartate 460, aspartate 462, and aspartate 464. Zn(2+) is bound by residues cysteine 814, cysteine 888, cysteine 895, and cysteine 898.

It belongs to the RNA polymerase beta' chain family. As to quaternary structure, the RNAP catalytic core consists of 2 alpha, 1 beta, 1 beta' and 1 omega subunit. When a sigma factor is associated with the core the holoenzyme is formed, which can initiate transcription. The cofactor is Mg(2+). Zn(2+) serves as cofactor.

The catalysed reaction is RNA(n) + a ribonucleoside 5'-triphosphate = RNA(n+1) + diphosphate. DNA-dependent RNA polymerase catalyzes the transcription of DNA into RNA using the four ribonucleoside triphosphates as substrates. The chain is DNA-directed RNA polymerase subunit beta' from Shewanella woodyi (strain ATCC 51908 / MS32).